Here is a 276-residue protein sequence, read N- to C-terminus: Putative E3 ubiquitin-protein ligase SINA-like 9 (276 aa).

Residues 38 to 74 (CPICCEALTSPIFQCDNGHLACGSCCPKLSNKCPACT) form an RING-type zinc finger. An SBD region spans residues 88–274 (VLESILIPCP…MQVFIIENVD (187 aa)). An SIAH-type zinc finger spans residues 91 to 149 (SILIPCPNVRFGCTKSFFYGKESAHEKECIFSQCSCPSSVCDYTGSYKDLYAHYKLTHS). Zn(2+) is bound by residues cysteine 96, cysteine 103, histidine 115, cysteine 119, cysteine 126, cysteine 131, histidine 143, and histidine 148.

Belongs to the SINA (Seven in absentia) family.

The catalysed reaction is S-ubiquitinyl-[E2 ubiquitin-conjugating enzyme]-L-cysteine + [acceptor protein]-L-lysine = [E2 ubiquitin-conjugating enzyme]-L-cysteine + N(6)-ubiquitinyl-[acceptor protein]-L-lysine.. The protein operates within protein modification; protein ubiquitination. In terms of biological role, E3 ubiquitin-protein ligase that mediates ubiquitination and subsequent proteasomal degradation of target proteins. E3 ubiquitin ligases accept ubiquitin from an E2 ubiquitin-conjugating enzyme in the form of a thioester and then directly transfers the ubiquitin to targeted substrates. It probably triggers the ubiquitin-mediated degradation of different substrates. This is Putative E3 ubiquitin-protein ligase SINA-like 9 from Arabidopsis thaliana (Mouse-ear cress).